The chain runs to 70 residues: DNA gyrase inhibitor YacG (70 aa).

Positions 21, 24, 36, and 40 each coordinate Zn(2+).

This sequence belongs to the DNA gyrase inhibitor YacG family. In terms of assembly, interacts with GyrB. The cofactor is Zn(2+).

Functionally, inhibits all the catalytic activities of DNA gyrase by preventing its interaction with DNA. Acts by binding directly to the C-terminal domain of GyrB, which probably disrupts DNA binding by the gyrase. This Sinorhizobium medicae (strain WSM419) (Ensifer medicae) protein is DNA gyrase inhibitor YacG.